Reading from the N-terminus, the 372-residue chain is MHIESPIKRRQSTRIYVGNVPIGDGAPIAVQSMTNTLTTDVAATVAQINALQKVGADIVRVSVPTMDAAEAFKLIKQQVSVPLVADIHFDYRIALKVAEYGVDCLRINPGNIGNEQRIRSVVDCARDNNIPIRIGVNGGSLEKDIQAKYKEPTAEALLESAMRHVDILDRMNFDQFKVSVKASDVFLAVDSYRLLAKQIVQPLHLGITEAGGARAGSVKSAVGLGLLLSEGIGDTLRISLAADPIEEIKVGFDILKSLRIRSRGINFIACPTCSRQEFDVIATVNELEQRLEDLITPMDVSLIGCVVNGPGEAEVSHMGIAGSYRKSAFYEDGIRQKERFDNDNIVDKLEARIRAKAAMLSKENQIDINQID.

[4Fe-4S] cluster contacts are provided by Cys270, Cys273, Cys305, and Glu312.

It belongs to the IspG family. [4Fe-4S] cluster is required as a cofactor.

It catalyses the reaction (2E)-4-hydroxy-3-methylbut-2-enyl diphosphate + oxidized [flavodoxin] + H2O + 2 H(+) = 2-C-methyl-D-erythritol 2,4-cyclic diphosphate + reduced [flavodoxin]. It functions in the pathway isoprenoid biosynthesis; isopentenyl diphosphate biosynthesis via DXP pathway; isopentenyl diphosphate from 1-deoxy-D-xylulose 5-phosphate: step 5/6. Converts 2C-methyl-D-erythritol 2,4-cyclodiphosphate (ME-2,4cPP) into 1-hydroxy-2-methyl-2-(E)-butenyl 4-diphosphate. In Aliivibrio salmonicida (strain LFI1238) (Vibrio salmonicida (strain LFI1238)), this protein is 4-hydroxy-3-methylbut-2-en-1-yl diphosphate synthase (flavodoxin).